The chain runs to 188 residues: Peptidyl-tRNA hydrolase (188 aa).

A tRNA-binding site is contributed by Tyr15. The active-site Proton acceptor is His20. The tRNA site is built by Phe66, Asn68, and Asn114.

This sequence belongs to the PTH family. Monomer.

It localises to the cytoplasm. The enzyme catalyses an N-acyl-L-alpha-aminoacyl-tRNA + H2O = an N-acyl-L-amino acid + a tRNA + H(+). Its function is as follows. Hydrolyzes ribosome-free peptidyl-tRNAs (with 1 or more amino acids incorporated), which drop off the ribosome during protein synthesis, or as a result of ribosome stalling. Functionally, catalyzes the release of premature peptidyl moieties from peptidyl-tRNA molecules trapped in stalled 50S ribosomal subunits, and thus maintains levels of free tRNAs and 50S ribosomes. The polypeptide is Peptidyl-tRNA hydrolase (Lactococcus lactis subsp. cremoris (strain MG1363)).